The primary structure comprises 301 residues: Sulfate adenylyltransferase subunit 2 (301 aa).

A disordered region spans residues 279 to 301 (RQGRLIDHDQDGSMEKKKQEGYF).

The protein belongs to the PAPS reductase family. CysD subfamily. Heterodimer composed of CysD, the smaller subunit, and CysN.

It carries out the reaction sulfate + ATP + H(+) = adenosine 5'-phosphosulfate + diphosphate. The protein operates within sulfur metabolism; hydrogen sulfide biosynthesis; sulfite from sulfate: step 1/3. Functionally, with CysN forms the ATP sulfurylase (ATPS) that catalyzes the adenylation of sulfate producing adenosine 5'-phosphosulfate (APS) and diphosphate, the first enzymatic step in sulfur assimilation pathway. APS synthesis involves the formation of a high-energy phosphoric-sulfuric acid anhydride bond driven by GTP hydrolysis by CysN coupled to ATP hydrolysis by CysD. This is Sulfate adenylyltransferase subunit 2 from Geotalea uraniireducens (strain Rf4) (Geobacter uraniireducens).